The primary structure comprises 211 residues: Small ribosomal subunit protein uS5 (211 aa).

The region spanning 58–121 (FEERIVKLKR…KKAHNSIHTV (64 aa)) is the S5 DRBM domain.

Belongs to the universal ribosomal protein uS5 family. Part of the 30S ribosomal subunit. Contacts proteins S4 and S8.

Functionally, with S4 and S12 plays an important role in translational accuracy. Its function is as follows. Located at the back of the 30S subunit body where it stabilizes the conformation of the head with respect to the body. The protein is Small ribosomal subunit protein uS5 of Mycoplasma genitalium (strain ATCC 33530 / DSM 19775 / NCTC 10195 / G37) (Mycoplasmoides genitalium).